We begin with the raw amino-acid sequence, 641 residues long: 1-deoxy-D-xylulose-5-phosphate synthase (641 aa).

Residues His-71 and 112-114 (SHA) each bind thiamine diphosphate. Asp-144 provides a ligand contact to Mg(2+). Thiamine diphosphate is bound by residues 145–146 (GA), Asn-173, Tyr-284, and Glu-365. Asn-173 provides a ligand contact to Mg(2+).

Belongs to the transketolase family. DXPS subfamily. Homodimer. Requires Mg(2+) as cofactor. The cofactor is thiamine diphosphate.

It catalyses the reaction D-glyceraldehyde 3-phosphate + pyruvate + H(+) = 1-deoxy-D-xylulose 5-phosphate + CO2. The protein operates within metabolic intermediate biosynthesis; 1-deoxy-D-xylulose 5-phosphate biosynthesis; 1-deoxy-D-xylulose 5-phosphate from D-glyceraldehyde 3-phosphate and pyruvate: step 1/1. Its function is as follows. Catalyzes the acyloin condensation reaction between C atoms 2 and 3 of pyruvate and glyceraldehyde 3-phosphate to yield 1-deoxy-D-xylulose-5-phosphate (DXP). The protein is 1-deoxy-D-xylulose-5-phosphate synthase of Mycobacterium avium (strain 104).